Here is a 309-residue protein sequence, read N- to C-terminus: Oxidoreductase NAD-binding domain-containing protein 1 (309 aa).

Residues 1–14 form the signal peptide; it reads MVVVIPRLLRGSLG. The region spanning 47–161 is the FAD-binding FR-type domain; it reads HLERTADVVR…VGGEFFFDPK (115 aa). 175 to 180 is a binding site for NAD(+); sequence GVGINP.

The polypeptide is Oxidoreductase NAD-binding domain-containing protein 1 (OXNAD1) (Bos taurus (Bovine)).